We begin with the raw amino-acid sequence, 37 residues long: Large ribosomal subunit protein bL36c (37 aa).

This sequence belongs to the bacterial ribosomal protein bL36 family.

The protein localises to the plastid. It localises to the chloroplast. In Angiopteris evecta (Mule's foot fern), this protein is Large ribosomal subunit protein bL36c.